Consider the following 193-residue polypeptide: C-type lectin domain family 3 member A homolog (193 aa).

A signal peptide spans 1–24 (MAQAGLLIWLFFTILLLDLTCTQS). Cystine bridges form between cysteine 66–cysteine 76, cysteine 93–cysteine 188, and cysteine 164–cysteine 180. The 118-residue stretch at 72 to 189 (IHKKCYLSFE…CRSLKKYICE (118 aa)) folds into the C-type lectin domain.

It is found in the secreted. The protein is C-type lectin domain family 3 member A homolog (clec3a) of Xenopus laevis (African clawed frog).